We begin with the raw amino-acid sequence, 786 residues long: DNA repair and recombination protein RAD54-like (786 aa).

The required for chromatin remodeling, strand pairing activities and coupling of ATPase activity stretch occupies residues 2-9 (RRSLAPSQ). Residue threonine 22 is modified to Phosphothreonine. Positions 165–340 (EGKRGNFNGC…FSLVNFVNPE (176 aa)) constitute a Helicase ATP-binding domain. An ATP-binding site is contributed by 178–185 (DEMGLGKT). Positions 291–294 (DEGH) match the DEGH box motif. Residues 497–654 (LLDFMLAAIR…NNDSAEKHFT (158 aa)) enclose the Helicase C-terminal domain. The interval 740-786 (KQPTCITEDNHSEQPQLNSKRNANSVLENDDDEDFDPNSSDEKFLGF) is disordered. The segment covering 752-766 (EQPQLNSKRNANSVL) has biased composition (polar residues).

Belongs to the SNF2/RAD54 helicase family. As to quaternary structure, interacts (via N-terminus) with spn-A/Rad51.

It is found in the nucleus. Involved in mitotic DNA repair and meiotic recombination. Functions in the recombinational DNA repair pathway. Essential for interhomolog gene conversion (GC), but may have a less important role in intersister GC than spn-A/Rad51. In the presence of DNA, spn-A/Rad51 enhances the ATPase activity of okr/Rad54. The sequence is that of DNA repair and recombination protein RAD54-like from Drosophila virilis (Fruit fly).